The sequence spans 466 residues: Benzoate transport protein (466 aa).

Topologically, residues 1-22 (MSREINVNQMIDDSKLTPFHWR) are cytoplasmic. A helical transmembrane segment spans residues 23-43 (VIILSTLIIIFDGYDLVIYGV). The Periplasmic segment spans residues 44–60 (ALPLLMKEWAIDPVTAG). The helical transmembrane segment at 61-81 (FIGSIALFGMMFGALIFGTIA) threads the bilayer. The Cytoplasmic segment spans residues 82-93 (DKLEHLGVSRKK). A helical membrane pass occupies residues 94–114 (VIAVCIILFSLCTVLCGFSET). Over 115-119 (TTQFS) the chain is Periplasmic. The helical transmembrane segment at 120 to 140 (IFRFLAGVGIGGVMPNVIALV) threads the bilayer. Over 141–150 (SEYAPKKFKS) the chain is Cytoplasmic. Residues 151–171 (FFVTLMFSGYAIGGMTAAFLG) form a helical membrane-spanning segment. Over 172 to 181 (SILVPLYGWK) the chain is Periplasmic. Residues 182–202 (IMFMIAGIPLVLLLPLMKVLP) form a helical membrane-spanning segment. The Cytoplasmic portion of the chain corresponds to 203-258 (ESIDYLVRKKKDETVRFIMTKMVPSYQYQPDHVFVLNSSNQNQAQAPVKMIFQEQR). A helical transmembrane segment spans residues 259-279 (AFSTMMFWCSIFMTLIMVYAL). Residues 280–297 (GNWLPKLMIEAGYNLSKS) lie on the Periplasmic side of the membrane. The helical transmembrane segment at 298-318 (LIFLFSLNVGGMIGSILGGYL) threads the bilayer. Topologically, residues 319 to 325 (ADRYNVK) are cytoplasmic. The helical transmembrane segment at 326–346 (FVTMGLLLLGAISLSLLSFQF) threads the bilayer. Topologically, residues 347 to 348 (SS) are periplasmic. Residues 349–369 (VILYILIACAGAASIGAQIML) traverse the membrane as a helical segment. Over 370–387 (LAYMAKFYAPNVRSTGIG) the chain is Cytoplasmic. The helical transmembrane segment at 388 to 408 (WGLGMGRVGAILGPILTGWLL) threads the bilayer. Topologically, residues 409–414 (SLQLPH) are periplasmic. Residues 415-435 (FYNFLALSIPAVLGIVTVFLI) traverse the membrane as a helical segment. The Cytoplasmic portion of the chain corresponds to 436 to 466 (NDRRMYQPEPISPIANQNDTTTVKVNEAVSH).

Belongs to the major facilitator superfamily. Aromatic acid:H(+) symporter (AAHS) (TC 2.A.1.15) family.

Its subcellular location is the cell inner membrane. Probable uptake of benzoate. The chain is Benzoate transport protein (benK) from Acinetobacter baylyi (strain ATCC 33305 / BD413 / ADP1).